A 177-amino-acid chain; its full sequence is Large ribosomal subunit protein uL5 (177 aa).

The protein belongs to the universal ribosomal protein uL5 family. As to quaternary structure, part of the 50S ribosomal subunit; part of the 5S rRNA/L5/L18/L25 subcomplex. Contacts the 5S rRNA and the P site tRNA. Forms a bridge to the 30S subunit in the 70S ribosome.

Its function is as follows. This is one of the proteins that bind and probably mediate the attachment of the 5S RNA into the large ribosomal subunit, where it forms part of the central protuberance. In the 70S ribosome it contacts protein S13 of the 30S subunit (bridge B1b), connecting the 2 subunits; this bridge is implicated in subunit movement. Contacts the P site tRNA; the 5S rRNA and some of its associated proteins might help stabilize positioning of ribosome-bound tRNAs. This is Large ribosomal subunit protein uL5 from Neorickettsia sennetsu (strain ATCC VR-367 / Miyayama) (Ehrlichia sennetsu).